A 342-amino-acid chain; its full sequence is MSKEPPKNSREKTKNLLLKLQDNICKGLENIDGKAKFTEESWLREEGGGGKSRVLKNGSIFEQAGVNFSEVHGKELPQSIISQRPEAKGHKWFATGTSMVLHPKNPFIPTVHLNYRYFEAGPVWWFGGGADLTPYYPYLTDVRNFHKEHCNACEKVNKNLHKVFKPWCDEYFFLKHRNESRGIGGIFYDYQDGSGRIYKGNNKESKAYKESINIGELNLNWNNLFSLAENCGGAFLDSYQPIIEKRVNQNYTKEQREFQLYRRGRYVEFNLVWDRGTIFGLQTNGRTESILMSLPPLARWEYGYKAKKGSREDYLTKIFTKPQDWQNDKILEKFCKENNIFD.

Residue Ser98 coordinates substrate. Positions 102 and 112 each coordinate a divalent metal cation. Catalysis depends on His112, which acts as the Proton donor. 114–116 (NYR) lines the substrate pocket. Residues His146 and His176 each contribute to the a divalent metal cation site. The tract at residues 266–301 (YVEFNLVWDRGTIFGLQTNGRTESILMSLPPLARWE) is important for dimerization.

The protein belongs to the aerobic coproporphyrinogen-III oxidase family. In terms of assembly, homodimer. The cofactor is a divalent metal cation.

Its subcellular location is the cytoplasm. It catalyses the reaction coproporphyrinogen III + O2 + 2 H(+) = protoporphyrinogen IX + 2 CO2 + 2 H2O. It participates in porphyrin-containing compound metabolism; protoporphyrin-IX biosynthesis; protoporphyrinogen-IX from coproporphyrinogen-III (O2 route): step 1/1. Its function is as follows. Involved in the heme and chlorophyll biosynthesis. Catalyzes the aerobic oxidative decarboxylation of propionate groups of rings A and B of coproporphyrinogen-III to yield the vinyl groups in protoporphyrinogen-IX. The polypeptide is Oxygen-dependent coproporphyrinogen-III oxidase (Prochlorococcus marinus subsp. pastoris (strain CCMP1986 / NIES-2087 / MED4)).